A 567-amino-acid polypeptide reads, in one-letter code: Proline--tRNA ligase (567 aa).

Belongs to the class-II aminoacyl-tRNA synthetase family. ProS type 1 subfamily. As to quaternary structure, homodimer.

It localises to the cytoplasm. It carries out the reaction tRNA(Pro) + L-proline + ATP = L-prolyl-tRNA(Pro) + AMP + diphosphate. Functionally, catalyzes the attachment of proline to tRNA(Pro) in a two-step reaction: proline is first activated by ATP to form Pro-AMP and then transferred to the acceptor end of tRNA(Pro). As ProRS can inadvertently accommodate and process non-cognate amino acids such as alanine and cysteine, to avoid such errors it has two additional distinct editing activities against alanine. One activity is designated as 'pretransfer' editing and involves the tRNA(Pro)-independent hydrolysis of activated Ala-AMP. The other activity is designated 'posttransfer' editing and involves deacylation of mischarged Ala-tRNA(Pro). The misacylated Cys-tRNA(Pro) is not edited by ProRS. In Stenotrophomonas maltophilia (strain R551-3), this protein is Proline--tRNA ligase.